The following is a 269-amino-acid chain: Nitrogen regulatory protein DAL80 (269 aa).

Residues 31-55 form a GATA-type zinc finger; it reads CQNCFTVKTPLWRRDEHGTVLCNAC.

The protein localises to the nucleus. Its function is as follows. Negative regulator of multiple nitrogen catabolic genes including the allantoin pathway genes. The protein is Nitrogen regulatory protein DAL80 (DAL80) of Saccharomyces cerevisiae (strain ATCC 204508 / S288c) (Baker's yeast).